The chain runs to 131 residues: Large ribosomal subunit protein bL17 (131 aa).

It belongs to the bacterial ribosomal protein bL17 family. In terms of assembly, part of the 50S ribosomal subunit. Contacts protein L32.

The protein is Large ribosomal subunit protein bL17 of Oenococcus oeni (strain ATCC BAA-331 / PSU-1).